The sequence spans 702 residues: Polyribonucleotide nucleotidyltransferase (702 aa).

2 residues coordinate Mg(2+): Asp484 and Asp490. The KH domain maps to 551–610 (PHIESFKIAVEKIGALIGPGGKTVKSLSDQYRVTINTDSDGTVTVSGRDAQSVFDAKVAV). The region spanning 620 to 688 (GRVYQGVVKR…RMGRLNLSYI (69 aa)) is the S1 motif domain.

This sequence belongs to the polyribonucleotide nucleotidyltransferase family. Requires Mg(2+) as cofactor.

The protein resides in the cytoplasm. It catalyses the reaction RNA(n+1) + phosphate = RNA(n) + a ribonucleoside 5'-diphosphate. Its function is as follows. Involved in mRNA degradation. Catalyzes the phosphorolysis of single-stranded polyribonucleotides processively in the 3'- to 5'-direction. The chain is Polyribonucleotide nucleotidyltransferase from Treponema pallidum (strain Nichols).